A 650-amino-acid polypeptide reads, in one-letter code: Chaperone protein DnaK (650 aa).

The residue at position 200 (Thr200) is a Phosphothreonine; by autocatalysis. Residues 614–634 are disordered; that stretch reads AGAAGAAGAAEGAAHAGGAQQ.

The protein belongs to the heat shock protein 70 family.

Its function is as follows. Acts as a chaperone. This Burkholderia cenocepacia (strain ATCC BAA-245 / DSM 16553 / LMG 16656 / NCTC 13227 / J2315 / CF5610) (Burkholderia cepacia (strain J2315)) protein is Chaperone protein DnaK.